A 153-amino-acid chain; its full sequence is Small ribosomal subunit protein uS5 (153 aa).

The S5 DRBM domain maps to 15-78 (FQEVVVNIGR…DDAFKNLIHV (64 aa)).

The protein belongs to the universal ribosomal protein uS5 family. As to quaternary structure, part of the 30S ribosomal subunit. Contacts proteins S4 and S8.

In terms of biological role, with S4 and S12 plays an important role in translational accuracy. Functionally, located at the back of the 30S subunit body where it stabilizes the conformation of the head with respect to the body. The polypeptide is Small ribosomal subunit protein uS5 (Helicobacter pylori (strain P12)).